Here is a 336-residue protein sequence, read N- to C-terminus: E3 ubiquitin-protein ligase RING2 (336 aa).

Serine 2 carries the N-acetylserine modification. The interval 2–179 (SQAVQTNGTQ…AEDNGDSSHC (178 aa)) is interaction with HIP2. Serine 41 is subject to Phosphoserine. The RING-type zinc finger occupies 51 to 91 (CPICLDMLKNTMTTKECLHRFCADCIITALRSGNKECPTCR). The interaction with nucleosomes via an acidic patch on histone H2A and histone H2B stretch occupies residues 93 to 98 (KLVSKR). Lysine 112 is covalently cross-linked (Glycyl lysine isopeptide (Lys-Gly) (interchain with G-Cter in ubiquitin)). Serine 143 and serine 168 each carry phosphoserine. A disordered region spans residues 157–213 (QRGKKQQIENGSGAEDNGDSSHCSNASTHSNQEAGPSNKRTKTSDDSGLEPDNNNAA). Polar residues predominate over residues 176-191 (SSHCSNASTHSNQEAG). Residues lysine 249 and lysine 323 each participate in a glycyl lysine isopeptide (Lys-Gly) (interchain with G-Cter in SUMO2) cross-link.

In terms of assembly, component of chromatin-associated Polycomb (PcG) complexes. Component of a number of PRC1-like complexes; these complexes contain either the polycomb group ring finger protein PCGF1, or PCGF2, or PCGF3, or BMI1, or PCGF5, or PCGF6. Distinct PRC1-like complexes are composed of a RING1 subunit (RING1B or RING1A), one of the six PCGF proteins (PCGF1, PCGF2, PCGF3, BMI1, PCGF5 or PCGF6), one PHC protein (PHC1, PHC2 or PHC3) and one of the CBX proteins (CBX2, CBX4, CBX6, CBX7 or CBX8). Part of a complex that contains RNF2, UB2D3 and BMI1; within that complex RNF2 and BMI1 form a tight heterodimer, where UB2D3 interacts only with RNF2. The complex composed of RNF2, UB2D3 and BMI1 binds nucleosomes, and has activity only with nucleosomal histone H2A. Part of a complex that contains PCGF5, RNF2 and UBE2D3. Part of a complex that contains AUTS2, PCGF5, RNF2, CSNK2B and RYBP. Interacts with CBX6 and CBX8. Interacts with PHC1, PCGF2, RYBP, CBX7, CBX4, CBX2, RNF1/RING1, BMI1 and PHC2. Interaction with RYBP and CBX7 is mutually exclusive; both compete for the same binding site on RNF2. Component of repressive BCOR complex containing a Polycomb group subcomplex at least composed of RYBP, PCGF1, BCOR and RING1. Interacts with CBX2 and PHC1. Interacts with CHTOP. Interacts with AURKB. Part of the E2F6.com-1 complex in G0 phase composed of E2F6, MGA, MAX, TFDP1, CBX3, BAT8, EUHMTASE1, RNF1/RING1, RNF2/RING2, MBLR, L3MBTL2 and YAF2. Component of some MLL1/MLL complex, at least composed of the core components KMT2A/MLL1, ASH2L, HCFC1/HCF1, WDR5 and RBBP5, as well as the facultative components BACC1, CHD8, E2F6, HSP70, INO80C, KANSL1, LAS1L, MAX, MCRS1, MGA, MYST1/MOF, PELP1, PHF20, PRP31, RING2, RUVB1/TIP49A, RUVB2/TIP49B, SENP3, TAF1, TAF4, TAF6, TAF7, TAF9 and TEX10. Interacts with RYBP, HIP2 and TFCP2. Interacts with NUPR1. Interacts with SAMD7 in a PHC2-dependent manner. Post-translationally, monoubiquitinated, by auto-ubiquitination. Polyubiquitinated in the presence of UBE2D3 (in vitro).

The protein localises to the nucleus. It localises to the cytoplasm. It is found in the chromosome. It catalyses the reaction S-ubiquitinyl-[E2 ubiquitin-conjugating enzyme]-L-cysteine + [acceptor protein]-L-lysine = [E2 ubiquitin-conjugating enzyme]-L-cysteine + N(6)-ubiquitinyl-[acceptor protein]-L-lysine.. It participates in protein modification; protein ubiquitination. Functionally, E3 ubiquitin-protein ligase that mediates monoubiquitination of 'Lys-119' of histone H2A (H2AK119Ub), thereby playing a central role in histone code and gene regulation. H2AK119Ub gives a specific tag for epigenetic transcriptional repression and participates in X chromosome inactivation of female mammals. May be involved in the initiation of both imprinted and random X inactivation. Essential component of a Polycomb group (PcG) multiprotein PRC1-like complex, a complex class required to maintain the transcriptionally repressive state of many genes, including Hox genes, throughout development. PcG PRC1 complex acts via chromatin remodeling and modification of histones, rendering chromatin heritably changed in its expressibility. E3 ubiquitin-protein ligase activity is enhanced by BMI1/PCGF4. Acts as the main E3 ubiquitin ligase on histone H2A of the PRC1 complex, while RING1 may rather act as a modulator of RNF2/RING2 activity. Plays a role in the transcriptional repression of genes that are required for pluripotency in embryonic stem cells, thereby contributing to differentiation of the ectodermal and endodermal germ layers. Association with the chromosomal DNA is cell-cycle dependent. In resting B- and T-lymphocytes, interaction with AURKB leads to block its activity, thereby maintaining transcription in resting lymphocytes. Also acts as a negative regulator of autophagy by mediating ubiquitination of AMBRA1, leading to its subsequent degradation. The chain is E3 ubiquitin-protein ligase RING2 (RNF2) from Pongo abelii (Sumatran orangutan).